Reading from the N-terminus, the 506-residue chain is Cobyric acid synthase (506 aa).

In terms of domain architecture, GATase cobBQ-type spans 251-448 (DITIAIVQLP…LHGLFDSDAF (198 aa)). Cysteine 332 functions as the Nucleophile in the catalytic mechanism. The active site involves histidine 440.

The protein belongs to the CobB/CobQ family. CobQ subfamily. In terms of assembly, homodimer.

It participates in cofactor biosynthesis; adenosylcobalamin biosynthesis. Its function is as follows. Catalyzes amidations at positions B, D, E, and G on adenosylcobyrinic A,C-diamide. NH(2) groups are provided by glutamine, and one molecule of ATP is hydrogenolyzed for each amidation. The sequence is that of Cobyric acid synthase (cbiP) from Salmonella typhimurium (strain LT2 / SGSC1412 / ATCC 700720).